A 297-amino-acid polypeptide reads, in one-letter code: Acetylglutamate kinase (297 aa).

Substrate is bound by residues 68-69 (GG), Arg90, and Asn195.

It belongs to the acetylglutamate kinase family. ArgB subfamily.

It localises to the cytoplasm. It carries out the reaction N-acetyl-L-glutamate + ATP = N-acetyl-L-glutamyl 5-phosphate + ADP. It functions in the pathway amino-acid biosynthesis; L-arginine biosynthesis; N(2)-acetyl-L-ornithine from L-glutamate: step 2/4. Its function is as follows. Catalyzes the ATP-dependent phosphorylation of N-acetyl-L-glutamate. This Chelativorans sp. (strain BNC1) protein is Acetylglutamate kinase.